The sequence spans 389 residues: 5-hydroxytryptamine receptor 1B (389 aa).

Residues 1 to 27 (MEDAGTPCAPPPPAGSQTGAPPANLSS) form a disordered region. The Extracellular segment spans residues 1-45 (MEDAGTPCAPPPPAGSQTGAPPANLSSAPHNCSAEGYIYQDSIAL). Residues 15-27 (GSQTGAPPANLSS) show a composition bias toward polar residues. Residues Asn24 and Asn31 are each glycosylated (N-linked (GlcNAc...) asparagine). A helical membrane pass occupies residues 46-71 (PWKVLLAILLALLTLATTLSNAFVIA). Over 72–85 (TVYRTRKLHTPANY) the chain is Cytoplasmic. The helical transmembrane segment at 86 to 110 (LIASLAVTDLLVSILVMPISTMYAV) threads the bilayer. The Extracellular segment spans residues 111–118 (TGRWTLGQ). A helical membrane pass occupies residues 119 to 144 (VVCDLWLSSDITCCTASILHLCVIAL). Cys121 and Cys198 are disulfide-bonded. Ergotamine contacts are provided by Asp128 and Thr133. A DRY motif; important for ligand-induced conformation changes and signaling motif is present at residues 145-147 (DRY). Topologically, residues 145 to 164 (DRYWAITDAVEYSAKRTPKR) are cytoplasmic. A helical transmembrane segment spans residues 165–183 (AAVMIALVWVFSISISLPP). Over 184–204 (FFWRQAKAEEEVSDCVVNTDH) the chain is Extracellular. Val200 is a binding site for ergotamine. The chain crosses the membrane as a helical span at residues 205–228 (ILYTVYSTVGAFYFPTLLLIALYG). Residues 229–314 (RIYVEARSRI…AARERKATKT (86 aa)) lie on the Cytoplasmic side of the membrane. The segment covering 258 to 271 (DSPGSTSSVTSVNS) has biased composition (polar residues). The segment at 258 to 281 (DSPGSTSSVTSVNSRAPDVPSESG) is disordered. The chain crosses the membrane as a helical span at residues 315-336 (LGIILGAFIVCWLPFFIISLVM). The Extracellular portion of the chain corresponds to 337–346 (PICKDACWFH). A helical membrane pass occupies residues 347-369 (LAIFDFFTWLGYLNSLINPIIYT). The NPxxY motif; important for ligand-induced conformation changes and signaling motif lies at 364 to 368 (NPIIY). The Cytoplasmic segment spans residues 370–389 (MSNEDFKQAFHKLIRFKCAS). Cys387 is lipidated: S-palmitoyl cysteine.

This sequence belongs to the G-protein coupled receptor 1 family. As to quaternary structure, homodimer. Heterodimer with HTR1D. Post-translationally, phosphorylated. Desensitization of the receptor may be mediated by its phosphorylation. Palmitoylated.

The protein localises to the cell membrane. G-protein coupled receptor for 5-hydroxytryptamine (serotonin). Also functions as a receptor for ergot alkaloid derivatives, various anxiolytic and antidepressant drugs and other psychoactive substances, such as lysergic acid diethylamide (LSD). Ligand binding causes a conformation change that triggers signaling via guanine nucleotide-binding proteins (G proteins) and modulates the activity of downstream effectors, such as adenylate cyclase. HTR1B is coupled to G(i)/G(o) G alpha proteins and mediates inhibitory neurotransmission by inhibiting adenylate cyclase activity. Arrestin family members inhibit signaling via G proteins and mediate activation of alternative signaling pathways. Regulates the release of 5-hydroxytryptamine, dopamine and acetylcholine in the brain, and thereby affects neural activity, nociceptive processing, pain perception, mood and behavior. Besides, plays a role in vasoconstriction of cerebral arteries. The protein is 5-hydroxytryptamine receptor 1B (HTR1B) of Vulpes vulpes (Red fox).